Reading from the N-terminus, the 227-residue chain is Large ribosomal subunit protein uL1 (227 aa).

The protein belongs to the universal ribosomal protein uL1 family. Part of the 50S ribosomal subunit.

Functionally, binds directly to 23S rRNA. The L1 stalk is quite mobile in the ribosome, and is involved in E site tRNA release. Its function is as follows. Protein L1 is also a translational repressor protein, it controls the translation of the L11 operon by binding to its mRNA. This chain is Large ribosomal subunit protein uL1, found in Brevibacillus brevis (strain 47 / JCM 6285 / NBRC 100599).